We begin with the raw amino-acid sequence, 428 residues long: Histidinol dehydrogenase (428 aa).

Positions 232, 254, and 257 each coordinate substrate. 2 residues coordinate Zn(2+): Gln254 and His257. Active-site proton acceptor residues include Glu324 and His325. Substrate is bound by residues His325, Asp358, Glu412, and His417. Asp358 contacts Zn(2+). His417 contributes to the Zn(2+) binding site.

This sequence belongs to the histidinol dehydrogenase family. Zn(2+) serves as cofactor.

It catalyses the reaction L-histidinol + 2 NAD(+) + H2O = L-histidine + 2 NADH + 3 H(+). It participates in amino-acid biosynthesis; L-histidine biosynthesis; L-histidine from 5-phospho-alpha-D-ribose 1-diphosphate: step 9/9. In terms of biological role, catalyzes the sequential NAD-dependent oxidations of L-histidinol to L-histidinaldehyde and then to L-histidine. The sequence is that of Histidinol dehydrogenase from Thermotoga maritima (strain ATCC 43589 / DSM 3109 / JCM 10099 / NBRC 100826 / MSB8).